A 327-amino-acid chain; its full sequence is Ornithine carbamoyltransferase (327 aa).

Residues 56-59, Q83, R107, and 134-137 contribute to the carbamoyl phosphate site; these read STRT and HPTQ. L-ornithine is bound by residues N166, D230, and 234-235; that span reads SM. Carbamoyl phosphate is bound by residues 269-270 and R314; that span reads CL.

Belongs to the aspartate/ornithine carbamoyltransferase superfamily. OTCase family.

It localises to the cytoplasm. The catalysed reaction is carbamoyl phosphate + L-ornithine = L-citrulline + phosphate + H(+). It functions in the pathway amino-acid degradation; L-arginine degradation via ADI pathway; carbamoyl phosphate from L-arginine: step 2/2. In terms of biological role, reversibly catalyzes the transfer of the carbamoyl group from carbamoyl phosphate (CP) to the N(epsilon) atom of ornithine (ORN) to produce L-citrulline. The sequence is that of Ornithine carbamoyltransferase from Borreliella burgdorferi (strain ZS7) (Borrelia burgdorferi).